Here is a 342-residue protein sequence, read N- to C-terminus: Protein pelota homolog (342 aa).

Belongs to the eukaryotic release factor 1 family. Pelota subfamily. Monomer. It depends on a divalent metal cation as a cofactor.

Its subcellular location is the cytoplasm. Functionally, may function in recognizing stalled ribosomes, interact with stem-loop structures in stalled mRNA molecules, and effect endonucleolytic cleavage of the mRNA. May play a role in the release non-functional ribosomes and degradation of damaged mRNAs. Has endoribonuclease activity. The protein is Protein pelota homolog of Sulfolobus acidocaldarius (strain ATCC 33909 / DSM 639 / JCM 8929 / NBRC 15157 / NCIMB 11770).